The primary structure comprises 360 residues: DNA replication and repair protein RecF (360 aa).

Gly33–Thr40 lines the ATP pocket.

It belongs to the RecF family.

It localises to the cytoplasm. Functionally, the RecF protein is involved in DNA metabolism; it is required for DNA replication and normal SOS inducibility. RecF binds preferentially to single-stranded, linear DNA. It also seems to bind ATP. The sequence is that of DNA replication and repair protein RecF from Rickettsia africae (strain ESF-5).